The primary structure comprises 851 residues: Thrombospondin type-1 domain-containing protein 1 (851 aa).

The signal sequence occupies residues 1-24 (MKPMLKDFSNLLLVVLCDYVLGEA). The Extracellular segment spans residues 25-412 (EYLLLQEPVH…SPQDPVKSNN (388 aa)). 6 N-linked (GlcNAc...) asparagine glycosylation sites follow: asparagine 53, asparagine 58, asparagine 69, asparagine 110, asparagine 135, and asparagine 304. A TSP type-1 domain is found at 339–392 (IETWGPWQPWSPCSTTCGDAVRERRRLCVTSFPSRPSCSGMSSETSPCSLEECA). Disulfide bonds link cysteine 351-cysteine 386, cysteine 355-cysteine 391, and cysteine 366-cysteine 376. The chain crosses the membrane as a helical span at residues 413-433 (VVTVTGISLCLFIIFATVLIT). The Cytoplasmic portion of the chain corresponds to 434-851 (LWRRFGRAPK…STLSVEKLVI (418 aa)). Serine 462 is subject to Phosphoserine. Disordered stretches follow at residues 471–516 (SEPR…ESFQ), 626–646 (KSQIRSTGGRDGSSERCHSRS), and 682–777 (SRMR…SSPI). Basic and acidic residues predominate over residues 685 to 695 (RTWDQMEDRCR). The segment covering 765-776 (SHRSASRKQSSP) has biased composition (polar residues).

As to quaternary structure, part of a complex composed of THSD1, PTK2/FAK1, TLN1 and VCL. Interacts with TLN1. As to expression, expressed in cerebral vascular endothelium.

The protein localises to the endosome membrane. It localises to the cell junction. The protein resides in the focal adhesion. In terms of biological role, is a positive regulator of nascent focal adhesion assembly, involved in the modulation of endothelial cell attachment to the extracellular matrix. In Mus musculus (Mouse), this protein is Thrombospondin type-1 domain-containing protein 1 (Thsd1).